The primary structure comprises 197 residues: Pyridoxal 5'-phosphate synthase subunit PdxT (197 aa).

L-glutamine is bound at residue 53–55 (GES). The active-site Nucleophile is the cysteine 85. L-glutamine is bound by residues arginine 114 and 142-143 (IR). Residues histidine 179 and glutamate 181 each act as charge relay system in the active site.

The protein belongs to the glutaminase PdxT/SNO family. As to quaternary structure, in the presence of PdxS, forms a dodecamer of heterodimers. Only shows activity in the heterodimer.

The catalysed reaction is aldehydo-D-ribose 5-phosphate + D-glyceraldehyde 3-phosphate + L-glutamine = pyridoxal 5'-phosphate + L-glutamate + phosphate + 3 H2O + H(+). It carries out the reaction L-glutamine + H2O = L-glutamate + NH4(+). It participates in cofactor biosynthesis; pyridoxal 5'-phosphate biosynthesis. Its function is as follows. Catalyzes the hydrolysis of glutamine to glutamate and ammonia as part of the biosynthesis of pyridoxal 5'-phosphate. The resulting ammonia molecule is channeled to the active site of PdxS. This Thermococcus onnurineus (strain NA1) protein is Pyridoxal 5'-phosphate synthase subunit PdxT.